The chain runs to 195 residues: Peptidyl-tRNA hydrolase (195 aa).

Residue tyrosine 17 participates in tRNA binding. Histidine 22 serves as the catalytic Proton acceptor. TRNA is bound by residues tyrosine 68, asparagine 70, and asparagine 116.

This sequence belongs to the PTH family. Monomer.

The protein resides in the cytoplasm. It carries out the reaction an N-acyl-L-alpha-aminoacyl-tRNA + H2O = an N-acyl-L-amino acid + a tRNA + H(+). In terms of biological role, hydrolyzes ribosome-free peptidyl-tRNAs (with 1 or more amino acids incorporated), which drop off the ribosome during protein synthesis, or as a result of ribosome stalling. Functionally, catalyzes the release of premature peptidyl moieties from peptidyl-tRNA molecules trapped in stalled 50S ribosomal subunits, and thus maintains levels of free tRNAs and 50S ribosomes. The chain is Peptidyl-tRNA hydrolase from Shewanella baltica (strain OS155 / ATCC BAA-1091).